Consider the following 363-residue polypeptide: Aminomethyltransferase (363 aa).

It belongs to the GcvT family. The glycine cleavage system is composed of four proteins: P, T, L and H.

It catalyses the reaction N(6)-[(R)-S(8)-aminomethyldihydrolipoyl]-L-lysyl-[protein] + (6S)-5,6,7,8-tetrahydrofolate = N(6)-[(R)-dihydrolipoyl]-L-lysyl-[protein] + (6R)-5,10-methylene-5,6,7,8-tetrahydrofolate + NH4(+). The glycine cleavage system catalyzes the degradation of glycine. The sequence is that of Aminomethyltransferase from Thermosipho melanesiensis (strain DSM 12029 / CIP 104789 / BI429).